A 216-amino-acid polypeptide reads, in one-letter code: Protein fmp32, mitochondrial (216 aa).

A coiled-coil region spans residues 111-133 (RQEMVALHSQVEQLFSDVERLKT). The helical transmembrane segment at 193–215 (TLQWVFGIVTGSGALLLAYVRLI) threads the bilayer.

This sequence belongs to the CCDC90 family.

The protein resides in the mitochondrion. It is found in the membrane. This is Protein fmp32, mitochondrial (fmp32) from Schizosaccharomyces pombe (strain 972 / ATCC 24843) (Fission yeast).